The chain runs to 149 residues: Large ribosomal subunit protein bL9 (149 aa).

The protein belongs to the bacterial ribosomal protein bL9 family.

In terms of biological role, binds to the 23S rRNA. In Buchnera aphidicola subsp. Cinara cedri (strain Cc), this protein is Large ribosomal subunit protein bL9.